The sequence spans 238 residues: Purine nucleoside phosphorylase DeoD-type 1 (238 aa).

Residue histidine 5 participates in a purine D-ribonucleoside binding. Residues glycine 21, arginine 25, arginine 44, and 88 to 91 (RVGS) contribute to the phosphate site. A purine D-ribonucleoside-binding positions include 180 to 182 (EME) and 204 to 205 (SD). Residue aspartate 205 is the Proton donor of the active site.

Belongs to the PNP/UDP phosphorylase family. In terms of assembly, homohexamer; trimer of homodimers.

The enzyme catalyses a purine D-ribonucleoside + phosphate = a purine nucleobase + alpha-D-ribose 1-phosphate. The catalysed reaction is a purine 2'-deoxy-D-ribonucleoside + phosphate = a purine nucleobase + 2-deoxy-alpha-D-ribose 1-phosphate. Functionally, catalyzes the reversible phosphorolytic breakdown of the N-glycosidic bond in the beta-(deoxy)ribonucleoside molecules, with the formation of the corresponding free purine bases and pentose-1-phosphate. In Aliivibrio fischeri (strain ATCC 700601 / ES114) (Vibrio fischeri), this protein is Purine nucleoside phosphorylase DeoD-type 1.